Here is a 2068-residue protein sequence, read N- to C-terminus: uncharacterized protein (2068 aa).

Transmembrane regions (helical) follow at residues 3–23 (FFII…NFCS) and 51–71 (TIYL…YYYI). The span at 975-998 (QMHSGEDEKEELGEPKEKGSKSCQ) shows a compositional bias: basic and acidic residues. Residues 975–1030 (QMHSGEDEKEELGEPKEKGSKSCQEEEEQDEEEEDEDEEEEEDQGVNNYDNYVDGV) are disordered. The span at 999–1018 (EEEEQDEEEEDEDEEEEEDQ) shows a compositional bias: acidic residues. A helical membrane pass occupies residues 1890–1910 (FLYNLSFIYNVYNYLILIYIY).

It is found in the membrane. This is an uncharacterized protein from Plasmodium falciparum (isolate 3D7).